Here is a 232-residue protein sequence, read N- to C-terminus: Small ribosomal subunit protein uS3 (232 aa).

A KH type-2 domain is found at 39–107; the sequence is VRQFLTKELQ…PAQINIAEVR (69 aa). The segment at 213–232 is disordered; it reads AANAVEPKGDKPKKQRKGRK.

Belongs to the universal ribosomal protein uS3 family. Part of the 30S ribosomal subunit. Forms a tight complex with proteins S10 and S14.

Its function is as follows. Binds the lower part of the 30S subunit head. Binds mRNA in the 70S ribosome, positioning it for translation. The polypeptide is Small ribosomal subunit protein uS3 (Vibrio campbellii (strain ATCC BAA-1116)).